A 427-amino-acid chain; its full sequence is MNAHAQACAVTSSSPDGVLRERGQREVFCGLTGIVWLHRKIQDAFFLVVGSRTCAHLIQSAAGVMIFAEPRFATAIMEERDLAGLVDANDELDRIVAQLLARRPDIKLLFLVGSCPSEVIKLDLSRAALRLSQRFSPGVRVLNYSGSGIETTFTQGEDACLAALVPVLPSADRNARPSLLVVGALADVVEDQFKRTFAALGIDNVAFLPPRRSSELPAIGPETRVLLAQPFLGDTARALEERGCRRISAPFPLGGEGTALWLAAAADAFGVSRAHVERTLAPLKARAEKALARYRAQLAGKRVFLFPDSQIEIPLARFLAREIGMELVEVGTPYLHRDHLAAELPMLPAGTLLSEGQDVERQLDRCREARPDLVVCGLGLANPLEAEGLTTKWSIELIFTPIQGFEQAGDLAELFARPLLRQTRLAV.

3 residues coordinate [4Fe-4S] cluster: Cys29, Cys54, and Cys115.

It belongs to the BchN/ChlN family. In terms of assembly, protochlorophyllide reductase is composed of three subunits; BchL, BchN and BchB. Forms a heterotetramer of two BchB and two BchN subunits. Requires [4Fe-4S] cluster as cofactor.

It catalyses the reaction chlorophyllide a + oxidized 2[4Fe-4S]-[ferredoxin] + 2 ADP + 2 phosphate = protochlorophyllide a + reduced 2[4Fe-4S]-[ferredoxin] + 2 ATP + 2 H2O. The protein operates within porphyrin-containing compound metabolism; bacteriochlorophyll biosynthesis (light-independent). Its function is as follows. Component of the dark-operative protochlorophyllide reductase (DPOR) that uses Mg-ATP and reduced ferredoxin to reduce ring D of protochlorophyllide (Pchlide) to form chlorophyllide a (Chlide). This reaction is light-independent. The NB-protein (BchN-BchB) is the catalytic component of the complex. This Bradyrhizobium sp. (strain ORS 278) protein is Light-independent protochlorophyllide reductase subunit N.